Consider the following 189-residue polypeptide: ATP synthase subunit delta (189 aa).

This sequence belongs to the ATPase delta chain family. F-type ATPases have 2 components, F(1) - the catalytic core - and F(0) - the membrane proton channel. F(1) has five subunits: alpha(3), beta(3), gamma(1), delta(1), epsilon(1). F(0) has three main subunits: a(1), b(2) and c(10-14). The alpha and beta chains form an alternating ring which encloses part of the gamma chain. F(1) is attached to F(0) by a central stalk formed by the gamma and epsilon chains, while a peripheral stalk is formed by the delta and b chains.

The protein resides in the cell inner membrane. Its function is as follows. F(1)F(0) ATP synthase produces ATP from ADP in the presence of a proton or sodium gradient. F-type ATPases consist of two structural domains, F(1) containing the extramembraneous catalytic core and F(0) containing the membrane proton channel, linked together by a central stalk and a peripheral stalk. During catalysis, ATP synthesis in the catalytic domain of F(1) is coupled via a rotary mechanism of the central stalk subunits to proton translocation. Functionally, this protein is part of the stalk that links CF(0) to CF(1). It either transmits conformational changes from CF(0) to CF(1) or is implicated in proton conduction. This chain is ATP synthase subunit delta, found in Methylorubrum extorquens (strain PA1) (Methylobacterium extorquens).